Consider the following 741-residue polypeptide: Penicillin-binding protein 1B (741 aa).

The Cytoplasmic portion of the chain corresponds to 1-12 (MYPVNLKLSIKF). Residues 13–33 (LFYFFLYFLLIIIIYGVYLYF) traverse the membrane as a helical; Signal-anchor for type II membrane protein segment. Residues 34-741 (KINQVIHGKI…WIRNHNIFCT (708 aa)) are Extracellular-facing. Residues 139-311 (LRLDPQLIAM…SLYNPWNNPV (173 aa)) form a transglycosylase region. The active-site Proton donor; for transglycosylase activity is E177. Residues 395-687 (ENAIRHGIQQ…STGAMKIYHN (293 aa)) form a transpeptidase region. S454 acts as the Acyl-ester intermediate; for transpeptidase activity in catalysis.

It in the N-terminal section; belongs to the glycosyltransferase 51 family. This sequence in the C-terminal section; belongs to the transpeptidase family.

The protein localises to the cell membrane. It catalyses the reaction [GlcNAc-(1-&gt;4)-Mur2Ac(oyl-L-Ala-gamma-D-Glu-L-Lys-D-Ala-D-Ala)](n)-di-trans,octa-cis-undecaprenyl diphosphate + beta-D-GlcNAc-(1-&gt;4)-Mur2Ac(oyl-L-Ala-gamma-D-Glu-L-Lys-D-Ala-D-Ala)-di-trans,octa-cis-undecaprenyl diphosphate = [GlcNAc-(1-&gt;4)-Mur2Ac(oyl-L-Ala-gamma-D-Glu-L-Lys-D-Ala-D-Ala)](n+1)-di-trans,octa-cis-undecaprenyl diphosphate + di-trans,octa-cis-undecaprenyl diphosphate + H(+). The enzyme catalyses Preferential cleavage: (Ac)2-L-Lys-D-Ala-|-D-Ala. Also transpeptidation of peptidyl-alanyl moieties that are N-acyl substituents of D-alanine.. Its pathway is cell wall biogenesis; peptidoglycan biosynthesis. Functionally, cell wall formation. Synthesis of cross-linked peptidoglycan from the lipid intermediates. The enzyme has a penicillin-insensitive transglycosylase N-terminal domain (formation of linear glycan strands) and a penicillin-sensitive transpeptidase C-terminal domain (cross-linking of the peptide subunits). This chain is Penicillin-binding protein 1B (mrcB), found in Buchnera aphidicola subsp. Baizongia pistaciae (strain Bp).